Consider the following 396-residue polypeptide: Phosphopentomutase (396 aa).

6 residues coordinate Mn(2+): aspartate 13, aspartate 288, histidine 293, aspartate 329, histidine 330, and histidine 341.

Belongs to the phosphopentomutase family. Mn(2+) is required as a cofactor.

It localises to the cytoplasm. It catalyses the reaction 2-deoxy-alpha-D-ribose 1-phosphate = 2-deoxy-D-ribose 5-phosphate. The enzyme catalyses alpha-D-ribose 1-phosphate = D-ribose 5-phosphate. It participates in carbohydrate degradation; 2-deoxy-D-ribose 1-phosphate degradation; D-glyceraldehyde 3-phosphate and acetaldehyde from 2-deoxy-alpha-D-ribose 1-phosphate: step 1/2. Its function is as follows. Isomerase that catalyzes the conversion of deoxy-ribose 1-phosphate (dRib-1-P) and ribose 1-phosphate (Rib-1-P) to deoxy-ribose 5-phosphate (dRib-5-P) and ribose 5-phosphate (Rib-5-P), respectively. This Clostridium perfringens (strain ATCC 13124 / DSM 756 / JCM 1290 / NCIMB 6125 / NCTC 8237 / Type A) protein is Phosphopentomutase.